Consider the following 21-residue polypeptide: Dahlein-5.4 (21 aa).

Expressed by the skin dorsal glands.

The protein localises to the secreted. In terms of biological role, has no antimicrobial activity. Strongly inhibits the formation of NO by neuronal nitric oxide synthase at micromolar concentrations. This Ranoidea dahlii (Dahl's aquatic frog) protein is Dahlein-5.4.